The chain runs to 453 residues: Pup--protein ligase (453 aa).

A Mg(2+)-binding site is contributed by E9. R53 is an ATP binding site. Y55 serves as a coordination point for Mg(2+). D57 serves as the catalytic Proton acceptor. E63 provides a ligand contact to Mg(2+). T66 and W420 together coordinate ATP.

Belongs to the Pup ligase/Pup deamidase family. Pup-conjugating enzyme subfamily.

It catalyses the reaction ATP + [prokaryotic ubiquitin-like protein]-L-glutamate + [protein]-L-lysine = ADP + phosphate + N(6)-([prokaryotic ubiquitin-like protein]-gamma-L-glutamyl)-[protein]-L-lysine.. The protein operates within protein degradation; proteasomal Pup-dependent pathway. It participates in protein modification; protein pupylation. Its function is as follows. Catalyzes the covalent attachment of the prokaryotic ubiquitin-like protein modifier Pup to the proteasomal substrate proteins, thereby targeting them for proteasomal degradation. This tagging system is termed pupylation. The ligation reaction involves the side-chain carboxylate of the C-terminal glutamate of Pup and the side-chain amino group of a substrate lysine. This Kineococcus radiotolerans (strain ATCC BAA-149 / DSM 14245 / SRS30216) protein is Pup--protein ligase.